The sequence spans 353 residues: Delta-aminolevulinic acid dehydratase (353 aa).

The active-site Schiff-base intermediate with substrate is the Lys221. 5-aminolevulinate-binding residues include Arg231 and Lys244. Glu260 is a binding site for Mg(2+). Lys275 functions as the Schiff-base intermediate with substrate in the catalytic mechanism. Positions 301 and 340 each coordinate 5-aminolevulinate.

Belongs to the ALAD family. Homooctamer. It depends on Mg(2+) as a cofactor.

The catalysed reaction is 2 5-aminolevulinate = porphobilinogen + 2 H2O + H(+). It participates in porphyrin-containing compound metabolism; protoporphyrin-IX biosynthesis; coproporphyrinogen-III from 5-aminolevulinate: step 1/4. Functionally, catalyzes an early step in the biosynthesis of tetrapyrroles. Binds two molecules of 5-aminolevulinate per subunit, each at a distinct site, and catalyzes their condensation to form porphobilinogen. Required for nodule development. This Bradyrhizobium diazoefficiens (strain JCM 10833 / BCRC 13528 / IAM 13628 / NBRC 14792 / USDA 110) protein is Delta-aminolevulinic acid dehydratase (hemB).